Here is a 552-residue protein sequence, read N- to C-terminus: Amino-acid acetyltransferase, mitochondrial (552 aa).

The transit peptide at 1 to 32 directs the protein to the mitochondrion; sequence MIKTWIRCLTTEVRYHQPNAHGRSLVMSVLNS. The region spanning 379–545 is the N-acetyltransferase domain; sequence QTGKSDPVSK…LRDYAKYVRD (167 aa).

This sequence belongs to the acetyltransferase family.

The protein resides in the mitochondrion. The enzyme catalyses L-glutamate + acetyl-CoA = N-acetyl-L-glutamate + CoA + H(+). It participates in amino-acid biosynthesis; L-arginine biosynthesis; N(2)-acetyl-L-ornithine from L-glutamate: step 1/4. Functionally, N-acetylglutamate synthase involved in arginine biosynthesis. This is Amino-acid acetyltransferase, mitochondrial (ARG2) from Kluyveromyces lactis (strain ATCC 8585 / CBS 2359 / DSM 70799 / NBRC 1267 / NRRL Y-1140 / WM37) (Yeast).